Here is a 535-residue protein sequence, read N- to C-terminus: CTP synthase (535 aa).

Residues 1-267 form an amidoligase domain region; the sequence is MTKYIFVTGG…DQIVCDHLKL (267 aa). Ser13 serves as a coordination point for CTP. Ser13 lines the UTP pocket. 14–19 serves as a coordination point for ATP; the sequence is SLGKGI. Tyr54 contributes to the L-glutamine binding site. Asp71 serves as a coordination point for ATP. Positions 71 and 141 each coordinate Mg(2+). CTP-binding positions include 148 to 150, 188 to 193, and Lys224; these read DIE and KTKPTQ. Residues 188 to 193 and Lys224 contribute to the UTP site; that span reads KTKPTQ. 240–242 is an ATP binding site; sequence RDA. A Glutamine amidotransferase type-1 domain is found at 292-534; that stretch reads KIALVGKYVE…VRASITNKES (243 aa). An L-glutamine-binding site is contributed by Gly354. Catalysis depends on Cys381, which acts as the Nucleophile; for glutamine hydrolysis. Residues 382–385, Glu405, and Arg462 each bind L-glutamine; that span reads LGMQ. Catalysis depends on residues His507 and Glu509.

The protein belongs to the CTP synthase family. As to quaternary structure, homotetramer.

The catalysed reaction is UTP + L-glutamine + ATP + H2O = CTP + L-glutamate + ADP + phosphate + 2 H(+). It carries out the reaction L-glutamine + H2O = L-glutamate + NH4(+). It catalyses the reaction UTP + NH4(+) + ATP = CTP + ADP + phosphate + 2 H(+). Its pathway is pyrimidine metabolism; CTP biosynthesis via de novo pathway; CTP from UDP: step 2/2. Allosterically activated by GTP, when glutamine is the substrate; GTP has no effect on the reaction when ammonia is the substrate. The allosteric effector GTP functions by stabilizing the protein conformation that binds the tetrahedral intermediate(s) formed during glutamine hydrolysis. Inhibited by the product CTP, via allosteric rather than competitive inhibition. Its function is as follows. Catalyzes the ATP-dependent amination of UTP to CTP with either L-glutamine or ammonia as the source of nitrogen. Regulates intracellular CTP levels through interactions with the four ribonucleotide triphosphates. This Bacillus cereus (strain G9842) protein is CTP synthase.